A 357-amino-acid polypeptide reads, in one-letter code: Protein MGF 360-14L (357 aa).

The protein belongs to the asfivirus MGF 360 family. As to quaternary structure, interacts with host IRF3 and TRIM21; these interactions mediates degradation of IRF3 through TRIM21 and ubiquitin-meditated proteolysis.

It is found in the host cytoplasm. Its function is as follows. Plays a role in virus cell tropism, and may be required for efficient virus replication in macrophages. Also inhibits the host cGAS/STING-mediated type I interferon production by inducing host IRF3 degradation through the proteasome pathway. The chain is Protein MGF 360-14L from Ornithodoros (relapsing fever ticks).